Reading from the N-terminus, the 815-residue chain is Subtilisin-like protease SBT2.5 (815 aa).

The N-terminal stretch at 1–19 (MDIGLRIFVVFVLLVAVTA) is a signal peptide. Residues 21 to 124 (VYIVTMEGDP…RSVDKDWKVR (104 aa)) form the Inhibitor I9 domain. Residues 120–671 (DWKVRRLTTH…SGHVNPSAAL (552 aa)) enclose the Peptidase S8 domain. Residues Asp160 and His234 each act as charge relay system in the active site. In terms of domain architecture, PA spans 397–501 (TLVSANDVLL…VSKSMDLIDY (105 aa)). Asn503 and Asn577 each carry an N-linked (GlcNAc...) asparagine glycan. Catalysis depends on Ser596, which acts as the Charge relay system. Asn701 carries an N-linked (GlcNAc...) asparagine glycan.

It belongs to the peptidase S8 family. Expressed in roots, leaves and flowers of mature plants.

The polypeptide is Subtilisin-like protease SBT2.5 (Arabidopsis thaliana (Mouse-ear cress)).